We begin with the raw amino-acid sequence, 82 residues long: MTKILLLTITFYKYFISPLLGNNCIFSPTCSEYAQEAIITHGIIKGLWLTFRRIIKCQPFCIGGYDNVPTSIKNSKQPTKKI.

This sequence belongs to the UPF0161 family.

Its subcellular location is the cell inner membrane. Functionally, could be involved in insertion of integral membrane proteins into the membrane. This is Putative membrane protein insertion efficiency factor from Rickettsia typhi (strain ATCC VR-144 / Wilmington).